The following is a 339-amino-acid chain: Undecaprenyl-phosphate 4-deoxy-4-formamido-L-arabinose transferase (339 aa).

2 helical membrane-spanning segments follow: residues 235 to 255 and 269 to 289; these read LSLV…FLLV and LFVL…GMGL.

The protein belongs to the glycosyltransferase 2 family.

The protein resides in the cell inner membrane. It catalyses the reaction UDP-4-deoxy-4-formamido-beta-L-arabinose + di-trans,octa-cis-undecaprenyl phosphate = 4-deoxy-4-formamido-alpha-L-arabinopyranosyl di-trans,octa-cis-undecaprenyl phosphate + UDP. It functions in the pathway glycolipid biosynthesis; 4-amino-4-deoxy-alpha-L-arabinose undecaprenyl phosphate biosynthesis; 4-amino-4-deoxy-alpha-L-arabinose undecaprenyl phosphate from UDP-4-deoxy-4-formamido-beta-L-arabinose and undecaprenyl phosphate: step 1/2. Its pathway is bacterial outer membrane biogenesis; lipopolysaccharide biosynthesis. Functionally, catalyzes the transfer of 4-deoxy-4-formamido-L-arabinose from UDP to undecaprenyl phosphate. The modified arabinose is attached to lipid A and is required for resistance to polymyxin and cationic antimicrobial peptides. This is Undecaprenyl-phosphate 4-deoxy-4-formamido-L-arabinose transferase from Pseudomonas aeruginosa (strain UCBPP-PA14).